Here is a 206-residue protein sequence, read N- to C-terminus: Urease accessory protein UreG (206 aa).

GTP is bound at residue 15–22 (GPVGSGKT).

It belongs to the SIMIBI class G3E GTPase family. UreG subfamily. In terms of assembly, homodimer. UreD, UreF and UreG form a complex that acts as a GTP-hydrolysis-dependent molecular chaperone, activating the urease apoprotein by helping to assemble the nickel containing metallocenter of UreC. The UreE protein probably delivers the nickel.

Its subcellular location is the cytoplasm. Its function is as follows. Facilitates the functional incorporation of the urease nickel metallocenter. This process requires GTP hydrolysis, probably effectuated by UreG. This chain is Urease accessory protein UreG, found in Ralstonia pickettii (strain 12J).